We begin with the raw amino-acid sequence, 224 residues long: Peroxiredoxin-6 (224 aa).

Residues 5 to 169 form the Thioredoxin domain; the sequence is LLLGDEAPNF…ILRVVDSLQL (165 aa). The interval 31–40 is required and sufficient for targeting to lysosomes and lamellar bodies; it reads DSWGILFSHP. Position 44 is a phosphothreonine (threonine 44). Cysteine 47 (cysteine sulfenic acid (-SOH) intermediate; for peroxidase activity) is an active-site residue. Residue lysine 63 is modified to N6-acetyllysine. Tyrosine 89 carries the phosphotyrosine modification. Aspartate 140 acts as the For phospholipase activity in catalysis. Threonine 177 is modified (phosphothreonine; by MAPK). At lysine 209 the chain carries N6-acetyllysine; alternate. Lysine 209 carries the N6-succinyllysine; alternate modification.

It belongs to the peroxiredoxin family. Prx6 subfamily. As to quaternary structure, homodimer. Interacts with GSTP1; mediates PRDX6 glutathionylation and regeneration. Interacts with APEX1. Interacts with STH. May interact with FAM168B. May interact with HTR2A. Phosphorylation at Thr-177 by MAP kinases increases the phospholipase activity of the enzyme. Phosphorylated form exhibits a greater lysophosphatidylcholine acyltransferase activity compared to the non-phosphorylated form. In terms of processing, irreversibly inactivated by overoxidation of Cys-47 to sulfinic acid (Cys-SO(2)H) and sulfonic acid (Cys-SO(3)H) forms upon oxidative stress.

It localises to the cytoplasm. Its subcellular location is the lysosome. The enzyme catalyses a hydroperoxide + 2 glutathione = an alcohol + glutathione disulfide + H2O. It carries out the reaction a 1,2-diacyl-sn-glycero-3-phosphocholine + H2O = a 1-acyl-sn-glycero-3-phosphocholine + a fatty acid + H(+). The catalysed reaction is a 1-acyl-sn-glycero-3-phosphocholine + an acyl-CoA = a 1,2-diacyl-sn-glycero-3-phosphocholine + CoA. It catalyses the reaction 1-hexadecanoyl-sn-glycero-3-phosphocholine + hexadecanoyl-CoA = 1,2-dihexadecanoyl-sn-glycero-3-phosphocholine + CoA. The enzyme catalyses 1,2-dihexadecanoyl-sn-glycero-3-phosphocholine + H2O = 1-hexadecanoyl-sn-glycero-3-phosphocholine + hexadecanoate + H(+). Its function is as follows. Thiol-specific peroxidase that catalyzes the reduction of hydrogen peroxide and organic hydroperoxides to water and alcohols, respectively. Can reduce H(2)O(2) and short chain organic, fatty acid, and phospholipid hydroperoxides. Also has phospholipase activity, can therefore either reduce the oxidized sn-2 fatty acyl group of phospholipids (peroxidase activity) or hydrolyze the sn-2 ester bond of phospholipids (phospholipase activity). These activities are dependent on binding to phospholipids at acidic pH and to oxidized phospholipds at cytosolic pH. Plays a role in cell protection against oxidative stress by detoxifying peroxides and in phospholipid homeostasis. Exhibits acyl-CoA-dependent lysophospholipid acyltransferase which mediates the conversion of lysophosphatidylcholine (1-acyl-sn-glycero-3-phosphocholine or LPC) into phosphatidylcholine (1,2-diacyl-sn-glycero-3-phosphocholine or PC). Shows a clear preference for LPC as the lysophospholipid and for palmitoyl CoA as the fatty acyl substrate. The polypeptide is Peroxiredoxin-6 (Prdx6) (Rattus norvegicus (Rat)).